Reading from the N-terminus, the 570-residue chain is Coiled-coil domain-containing protein 22 homolog (570 aa).

Disordered stretches follow at residues 110–129 (RQSE…REQL) and 234–280 (LTST…PLEL). The segment covering 248-257 (TSPTQTSTTA) has biased composition (polar residues). Residues 265–276 (SSEATATSTTTT) are compositionally biased toward low complexity. Coiled coils occupy residues 308–471 (ELKI…LQRQ) and 529–570 (GEKL…ITVG).

It belongs to the CCDC22 family.

In Drosophila willistoni (Fruit fly), this protein is Coiled-coil domain-containing protein 22 homolog.